The sequence spans 361 residues: Arginine N(omega)-methyltransferase (361 aa).

Residues 1–17 (MRHVQEARAVPAEHEAR) are compositionally biased toward basic and acidic residues. Residues 1-24 (MRHVQEARAVPAEHEARPAPVTMP) are disordered. The SAM-dependent MTase PRMT-type domain occupies 65–361 (DADAFAQIAR…WSDFTLRVSI (297 aa)).

It belongs to the class I-like SAM-binding methyltransferase superfamily. Protein arginine N-methyltransferase family.

It carries out the reaction L-arginine + S-adenosyl-L-methionine = N(omega)-methyl-L-arginine + S-adenosyl-L-homocysteine + H(+). It participates in antibiotic biosynthesis. Its function is as follows. Involved in the biosynthesis of the glucosamine-nitrosourea antibiotic streptozotocin (SZN). Catalyzes the conversion of L-arginine to N(omega)-methyl-L-arginine (L-NMA), using S-adenosyl-L-methionine (SAM) as a methyl donor. The chain is Arginine N(omega)-methyltransferase from Streptomyces achromogenes subsp. streptozoticus.